Reading from the N-terminus, the 368-residue chain is Glutamate 5-kinase (368 aa).

ATP is bound at residue K13. Substrate contacts are provided by S54, D141, and N153. ATP is bound at residue 173–174 (SD). A PUA domain is found at 278-355 (RGEITVDAGA…AEIEAVLGYP (78 aa)).

Belongs to the glutamate 5-kinase family.

Its subcellular location is the cytoplasm. It carries out the reaction L-glutamate + ATP = L-glutamyl 5-phosphate + ADP. The protein operates within amino-acid biosynthesis; L-proline biosynthesis; L-glutamate 5-semialdehyde from L-glutamate: step 1/2. Its function is as follows. Catalyzes the transfer of a phosphate group to glutamate to form L-glutamate 5-phosphate. The polypeptide is Glutamate 5-kinase (Dinoroseobacter shibae (strain DSM 16493 / NCIMB 14021 / DFL 12)).